We begin with the raw amino-acid sequence, 208 residues long: Granulocyte colony-stimulating factor (208 aa).

The first 30 residues, 1–30 (MAQLSAQRRMKLMALQLLLWQSALWSGREA), serve as a signal peptide directing secretion. 2 disulfides stabilise this stretch: C72–C78 and C100–C110. T169 carries an O-linked (GalNAc...) threonine glycan.

It belongs to the IL-6 superfamily. In terms of assembly, monomer. Post-translationally, O-glycosylated.

It is found in the secreted. Granulocyte/macrophage colony-stimulating factors are cytokines that act in hematopoiesis by controlling the production, differentiation, and function of 2 related white cell populations of the blood, the granulocytes and the monocytes-macrophages. This CSF induces granulocytes. The polypeptide is Granulocyte colony-stimulating factor (Csf3) (Mus musculus (Mouse)).